Reading from the N-terminus, the 276-residue chain is MLFFTGLQMIWIDKAMNISLSSAVAAASVSTASVGGVPHEITGGNRQEKLAQLMRQFESGGLYLRTVSDHRDEFENTFMPKLDACLGHGCDERYWSSATFIQQGLNGKVHDPHADRTGLIISADARLGGFSTFDAATANVPSGLEPSQYFPGQFPKFDMMGAYQATWNEDIFSVDATAVSEQQMDELGIPDEYRSVFDFDRIQEKMAQPRLAGREVEPTEAKICYQPKDVLGIYVDVDSPASQSKARELQQAMREQGFDLPFIAYRGGAAQELASV.

As to quaternary structure, interacts directly with host ubiquitin.

The protein localises to the secreted. Its subcellular location is the host cell. The catalysed reaction is L-threonyl-[protein] + NAD(+) = O-(ADP-D-ribosyl)-L-threonyl-[protein] + nicotinamide + H(+). In terms of biological role, ADP-ribosyltransferase that specifically modifies host ubiquitin on 'Thr-66' residue, which causes the shutdown of polyubiquitin synthesis and disrupts the recognition and reversal of polyubiquitin in host cells during infection. Threonine ADP-ribosylation of ubiquitin prevents the transfer of ubiquitin from ubiquitin-activating enzyme E1 to ubiquitin-conjugating enzyme E2, which inhibits subsequent ubiquitin activation and leads to the shutdown of polyubiquitin synthesis in host cells. The modification also causes dysfunction of polyubiquitin chains in cells, thereby blocking host ubiquitin signaling. ADP-ribosylation by CteC is likely irreversible. Plays a crucial role in bacterial colonization in mice during infection. This is NAD(+)--protein-threonine ADP-ribosyltransferase from Chromobacterium violaceum (strain ATCC 12472 / DSM 30191 / JCM 1249 / CCUG 213 / NBRC 12614 / NCIMB 9131 / NCTC 9757 / MK).